Here is a 346-residue protein sequence, read N- to C-terminus: tRNA N6-adenosine threonylcarbamoyltransferase (346 aa).

Residues His-111 and His-115 each contribute to the Fe cation site. Substrate is bound by residues 134–138 (LVSGG), Asp-167, Gly-180, and Asn-277. Residue Asp-305 coordinates Fe cation.

This sequence belongs to the KAE1 / TsaD family. Fe(2+) serves as cofactor.

It is found in the cytoplasm. The enzyme catalyses L-threonylcarbamoyladenylate + adenosine(37) in tRNA = N(6)-L-threonylcarbamoyladenosine(37) in tRNA + AMP + H(+). In terms of biological role, required for the formation of a threonylcarbamoyl group on adenosine at position 37 (t(6)A37) in tRNAs that read codons beginning with adenine. Is involved in the transfer of the threonylcarbamoyl moiety of threonylcarbamoyl-AMP (TC-AMP) to the N6 group of A37, together with TsaE and TsaB. TsaD likely plays a direct catalytic role in this reaction. This chain is tRNA N6-adenosine threonylcarbamoyltransferase, found in Bordetella parapertussis (strain 12822 / ATCC BAA-587 / NCTC 13253).